The following is a 389-amino-acid chain: Probable tRNA sulfurtransferase (389 aa).

Positions 57 to 165 constitute a THUMP domain; the sequence is DEALDRLSKI…EDETYIYHRV (109 aa). ATP contacts are provided by residues 183–184, Lys267, Gly289, and Gln298; that span reads LL.

This sequence belongs to the ThiI family.

Its subcellular location is the cytoplasm. It catalyses the reaction [ThiI sulfur-carrier protein]-S-sulfanyl-L-cysteine + a uridine in tRNA + 2 reduced [2Fe-2S]-[ferredoxin] + ATP + H(+) = [ThiI sulfur-carrier protein]-L-cysteine + a 4-thiouridine in tRNA + 2 oxidized [2Fe-2S]-[ferredoxin] + AMP + diphosphate. It carries out the reaction [ThiS sulfur-carrier protein]-C-terminal Gly-Gly-AMP + S-sulfanyl-L-cysteinyl-[cysteine desulfurase] + AH2 = [ThiS sulfur-carrier protein]-C-terminal-Gly-aminoethanethioate + L-cysteinyl-[cysteine desulfurase] + A + AMP + 2 H(+). It participates in cofactor biosynthesis; thiamine diphosphate biosynthesis. In terms of biological role, catalyzes the ATP-dependent transfer of a sulfur to tRNA to produce 4-thiouridine in position 8 of tRNAs, which functions as a near-UV photosensor. Also catalyzes the transfer of sulfur to the sulfur carrier protein ThiS, forming ThiS-thiocarboxylate. This is a step in the synthesis of thiazole, in the thiamine biosynthesis pathway. The sulfur is donated as persulfide by IscS. The protein is Probable tRNA sulfurtransferase of Methanothermobacter thermautotrophicus (strain ATCC 29096 / DSM 1053 / JCM 10044 / NBRC 100330 / Delta H) (Methanobacterium thermoautotrophicum).